A 160-amino-acid polypeptide reads, in one-letter code: Ribosomal RNA large subunit methyltransferase H (160 aa).

S-adenosyl-L-methionine contacts are provided by residues leucine 76, glycine 108, and 127 to 132; that span reads FGFMTW.

Belongs to the RNA methyltransferase RlmH family. In terms of assembly, homodimer.

Its subcellular location is the cytoplasm. It catalyses the reaction pseudouridine(1915) in 23S rRNA + S-adenosyl-L-methionine = N(3)-methylpseudouridine(1915) in 23S rRNA + S-adenosyl-L-homocysteine + H(+). Specifically methylates the pseudouridine at position 1915 (m3Psi1915) in 23S rRNA. The protein is Ribosomal RNA large subunit methyltransferase H of Bartonella henselae (strain ATCC 49882 / DSM 28221 / CCUG 30454 / Houston 1) (Rochalimaea henselae).